A 310-amino-acid polypeptide reads, in one-letter code: N-acetyl-gamma-glutamyl-phosphate reductase (310 aa).

The active site involves cysteine 117.

The protein belongs to the NAGSA dehydrogenase family. Type 2 subfamily.

The protein localises to the cytoplasm. It catalyses the reaction N-acetyl-L-glutamate 5-semialdehyde + phosphate + NADP(+) = N-acetyl-L-glutamyl 5-phosphate + NADPH + H(+). It participates in amino-acid biosynthesis; L-arginine biosynthesis; N(2)-acetyl-L-ornithine from L-glutamate: step 3/4. Catalyzes the NADPH-dependent reduction of N-acetyl-5-glutamyl phosphate to yield N-acetyl-L-glutamate 5-semialdehyde. The polypeptide is N-acetyl-gamma-glutamyl-phosphate reductase (Rhizobium rhizogenes (strain K84 / ATCC BAA-868) (Agrobacterium radiobacter)).